The following is a 340-amino-acid chain: Melanin-concentrating hormone receptor 2 (340 aa).

Residues 1-34 are Extracellular-facing; sequence MNPFHSSCWNTSAELSNKSWNKEFAYQTASAVDT. 2 N-linked (GlcNAc...) asparagine glycosylation sites follow: N10 and N17. Residues 35-57 form a helical membrane-spanning segment; it reads VILPSMIGIICSTGLVGNILIVF. Topologically, residues 58 to 69 are cytoplasmic; that stretch reads TIIRSRKKTVPD. The chain crosses the membrane as a helical span at residues 70-92; that stretch reads IYICNLAVADLVHIIGMPFLIHQ. Topologically, residues 93–106 are extracellular; it reads WARGGEWVFGGPLC. A helical transmembrane segment spans residues 107–129; it reads TIITSLDTCNQFACSAIMTVMSV. Residues 130-149 lie on the Cytoplasmic side of the membrane; sequence DRYFALVQPFRLTSWRTRYK. The chain crosses the membrane as a helical span at residues 150–172; sequence TIRINLGLWAASFILALPVWIYS. At 173–198 the chain is on the extracellular side; it reads KVIKFKDGVESCAFDLTSPDDVLWYT. The chain crosses the membrane as a helical span at residues 199–221; the sequence is LYLTITTFFFPLPLILVCYILIL. At 222–252 the chain is on the cytoplasmic side; sequence CYTWEMYQQNKDARCCNPSVPKQRVMKLTKM. The chain crosses the membrane as a helical span at residues 253–272; that stretch reads VLVLVAVFILSAAPYHVIQL. Topologically, residues 273–286 are extracellular; it reads VNLQMEQPTLAFYV. The chain crosses the membrane as a helical span at residues 287–309; the sequence is GYYLSICLSYASSSINPFLYILL. Residues 310–340 are Cytoplasmic-facing; sequence SGNFQKRLPQIQRRVTDKEIKNMGNTLKSHF.

The protein belongs to the G-protein coupled receptor 1 family.

It localises to the cell membrane. Receptor for melanin-concentrating hormone, coupled to G proteins that activate phosphoinositide hydrolysis. In Macaca fascicularis (Crab-eating macaque), this protein is Melanin-concentrating hormone receptor 2 (MCHR2).